Here is a 222-residue protein sequence, read N- to C-terminus: Flagellin B5 (222 aa).

Residues 1-4 (MRRG) constitute a propeptide that is removed on maturation.

The protein belongs to the archaeal flagellin family.

The protein localises to the archaeal flagellum. Functionally, flagellin is the subunit protein which polymerizes to form the filaments of archaeal flagella. This Pyrococcus abyssi (strain GE5 / Orsay) protein is Flagellin B5 (flaB5).